The sequence spans 345 residues: Phosphoribosylformylglycinamidine cyclo-ligase (345 aa).

Belongs to the AIR synthase family.

It is found in the cytoplasm. The enzyme catalyses 2-formamido-N(1)-(5-O-phospho-beta-D-ribosyl)acetamidine + ATP = 5-amino-1-(5-phospho-beta-D-ribosyl)imidazole + ADP + phosphate + H(+). Its pathway is purine metabolism; IMP biosynthesis via de novo pathway; 5-amino-1-(5-phospho-D-ribosyl)imidazole from N(2)-formyl-N(1)-(5-phospho-D-ribosyl)glycinamide: step 2/2. This chain is Phosphoribosylformylglycinamidine cyclo-ligase, found in Salmonella typhimurium (strain LT2 / SGSC1412 / ATCC 700720).